The chain runs to 400 residues: Nicotinate phosphoribosyltransferase (400 aa).

His-220 carries the phosphohistidine; by autocatalysis modification.

The protein belongs to the NAPRTase family. In terms of processing, transiently phosphorylated on a His residue during the reaction cycle. Phosphorylation strongly increases the affinity for substrates and increases the rate of nicotinate D-ribonucleotide production. Dephosphorylation regenerates the low-affinity form of the enzyme, leading to product release.

It catalyses the reaction nicotinate + 5-phospho-alpha-D-ribose 1-diphosphate + ATP + H2O = nicotinate beta-D-ribonucleotide + ADP + phosphate + diphosphate. It functions in the pathway cofactor biosynthesis; NAD(+) biosynthesis; nicotinate D-ribonucleotide from nicotinate: step 1/1. In terms of biological role, catalyzes the synthesis of beta-nicotinate D-ribonucleotide from nicotinate and 5-phospho-D-ribose 1-phosphate at the expense of ATP. This chain is Nicotinate phosphoribosyltransferase, found in Salmonella heidelberg (strain SL476).